The primary structure comprises 483 residues: Wax ester synthase/diacylglycerol acyltransferase 10 (483 aa).

At 1–203 (MTKEEVEEEP…SINAVYYAVR (203 aa)) the chain is on the cytoplasmic side. H143 acts as the Proton acceptor in catalysis. Residues 204-222 (LIWNTIVDLLLLWATSLFF) form a helical membrane-spanning segment. The Lumenal segment spans residues 223–483 (KDTETPISEG…MKDTLSGKSD (261 aa)). N-linked (GlcNAc...) asparagine glycosylation is found at N394 and N399.

This sequence in the N-terminal section; belongs to the long-chain O-acyltransferase family. Mostly expressed in roots.

It is found in the cell membrane. It localises to the endoplasmic reticulum membrane. It carries out the reaction an acyl-CoA + a 1,2-diacyl-sn-glycerol = a triacyl-sn-glycerol + CoA. It catalyses the reaction a long chain fatty alcohol + a fatty acyl-CoA = a wax ester + CoA. The protein operates within glycerolipid metabolism; triacylglycerol biosynthesis. It functions in the pathway lipid metabolism. Bifunctional wax ester synthase/diacylglycerol acyltransferase. Involved in cuticular wax biosynthesis. The polypeptide is Wax ester synthase/diacylglycerol acyltransferase 10 (Arabidopsis thaliana (Mouse-ear cress)).